The sequence spans 765 residues: Glycine--tRNA ligase (765 aa).

A mitochondrion-targeting transit peptide spans 1–87; it reads MSLQLLKALP…LRSAAAEFIM (87 aa). Residues 41 to 73 form a disordered region; that stretch reads TTTKPTPSAPPPPPPTQPQQPAATTSWGTKKQN. The span at 47 to 58 shows a compositional bias: pro residues; sequence PSAPPPPPPTQP. The WHEP-TRS domain maps to 95 to 151; sequence QLAPLRERVQEQGNLVRDLKAKGAPEIDVKKAVAELKARKKLLEDKELALTPSVVSF. Glutamate 331 contributes to the glycine binding site. ATP is bound by residues 363-365 and 374-375; these read RNE and RV. Glycine is bound at residue glutamate 382. 489 to 490 serves as a coordination point for ATP; sequence EC. Residue 609–611 coordinates glycine; that stretch reads EPS. Residue arginine 616 coordinates ATP.

Belongs to the class-II aminoacyl-tRNA synthetase family. As to quaternary structure, homodimer.

It is found in the mitochondrion. It localises to the cytoplasm. The protein resides in the cell projection. The protein localises to the axon. It carries out the reaction 2 ATP + H(+) = P(1),P(4)-bis(5'-adenosyl) tetraphosphate + diphosphate. The catalysed reaction is tRNA(Gly) + glycine + ATP = glycyl-tRNA(Gly) + AMP + diphosphate. Its function is as follows. Catalyzes the ATP-dependent ligation of glycine to the 3'-end of its cognate tRNA, via the formation of an aminoacyl-adenylate intermediate (Gly-AMP). Also produces diadenosine tetraphosphate (Ap4A), a universal pleiotropic signaling molecule needed for cell regulation pathways, by direct condensation of 2 ATPs. Thereby, may play a special role in Ap4A homeostasis. Required for terminal arborization of both dendrites and axons during development. This is Glycine--tRNA ligase from Drosophila melanogaster (Fruit fly).